The following is a 1226-amino-acid chain: DNA-directed RNA polymerase subunit beta (1226 aa).

It belongs to the RNA polymerase beta chain family. The RNAP catalytic core consists of 2 alpha, 1 beta, 1 beta' and 1 omega subunit. When a sigma factor is associated with the core the holoenzyme is formed, which can initiate transcription.

The enzyme catalyses RNA(n) + a ribonucleoside 5'-triphosphate = RNA(n+1) + diphosphate. Functionally, DNA-dependent RNA polymerase catalyzes the transcription of DNA into RNA using the four ribonucleoside triphosphates as substrates. This is DNA-directed RNA polymerase subunit beta from Leptospira interrogans serogroup Icterohaemorrhagiae serovar copenhageni (strain Fiocruz L1-130).